Consider the following 81-residue polypeptide: Photosystem I iron-sulfur center (81 aa).

4Fe-4S ferredoxin-type domains lie at 2-31 (AHIV…MVPW) and 39-68 (MASA…VRVY). Residues C11, C14, C17, C21, C48, C51, C54, and C58 each contribute to the [4Fe-4S] cluster site.

As to quaternary structure, the eukaryotic PSI reaction center is composed of at least 11 subunits. [4Fe-4S] cluster serves as cofactor.

The protein localises to the plastid. The protein resides in the chloroplast thylakoid membrane. It catalyses the reaction reduced [plastocyanin] + hnu + oxidized [2Fe-2S]-[ferredoxin] = oxidized [plastocyanin] + reduced [2Fe-2S]-[ferredoxin]. Functionally, apoprotein for the two 4Fe-4S centers FA and FB of photosystem I (PSI); essential for photochemical activity. FB is the terminal electron acceptor of PSI, donating electrons to ferredoxin. The C-terminus interacts with PsaA/B/D and helps assemble the protein into the PSI complex. Required for binding of PsaD and PsaE to PSI. PSI is a plastocyanin/cytochrome c6-ferredoxin oxidoreductase, converting photonic excitation into a charge separation, which transfers an electron from the donor P700 chlorophyll pair to the spectroscopically characterized acceptors A0, A1, FX, FA and FB in turn. The polypeptide is Photosystem I iron-sulfur center (Chlamydomonas reinhardtii (Chlamydomonas smithii)).